Here is a 226-residue protein sequence, read N- to C-terminus: Peroxynitrite isomerase (226 aa).

The short motif at Gly21 to Gly27 is the GXWXGXG element. Residue His191 coordinates heme b. A disordered region spans residues Ser201–Ser226.

This sequence belongs to the nitrobindin family. In terms of assembly, homodimer. Heme b is required as a cofactor.

The enzyme catalyses peroxynitrite = nitrate. The protein operates within nitrogen metabolism. Heme-binding protein able to scavenge peroxynitrite and to protect free L-tyrosine against peroxynitrite-mediated nitration, by acting as a peroxynitrite isomerase that converts peroxynitrite to nitrate. Therefore, this protein likely plays a role in peroxynitrite sensing and in the detoxification of reactive nitrogen and oxygen species (RNS and ROS, respectively). Is able to bind nitric oxide (NO) in vitro, but may act as a sensor of peroxynitrite levels in vivo. The polypeptide is Peroxynitrite isomerase (Micrococcus luteus (strain ATCC 4698 / DSM 20030 / JCM 1464 / CCM 169 / CCUG 5858 / IAM 1056 / NBRC 3333 / NCIMB 9278 / NCTC 2665 / VKM Ac-2230) (Micrococcus lysodeikticus)).